The sequence spans 291 residues: Beta-lactamase CTX-M-15 (291 aa).

The signal sequence occupies residues 1–28 (MVKKSLRQFTLMATATVTLLLGSVPLYA). Serine 73 serves as the catalytic Nucleophile; acyl-ester intermediate. Lysine 76, serine 133, glutamate 169, and serine 240 together coordinate a beta-lactam.

This sequence belongs to the class-A beta-lactamase family. Monomer.

It localises to the secreted. It carries out the reaction a beta-lactam + H2O = a substituted beta-amino acid. With respect to regulation, inhibited by the beta-lactamase-blocking agents clavulanic acid and avibactam, via a covalent binding to Ser-73. In terms of biological role, extended-spectrum beta-lactamase (ESBL) which confers resistance to penicillins, as well as first, second, third and fourth-generation cephalosporins. Has cefotaxime- and ceftazidime-hydrolyzing activity. Inactive against the carbapenem antibiotics, imipenem, meropenem and ertapenem. The chain is Beta-lactamase CTX-M-15 from Escherichia coli O25b:H4.